The primary structure comprises 235 residues: Large ribosomal subunit protein uL1 (235 aa).

It belongs to the universal ribosomal protein uL1 family. Part of the 50S ribosomal subunit.

Functionally, binds directly to 23S rRNA. The L1 stalk is quite mobile in the ribosome, and is involved in E site tRNA release. In terms of biological role, protein L1 is also a translational repressor protein, it controls the translation of the L11 operon by binding to its mRNA. This Corynebacterium diphtheriae (strain ATCC 700971 / NCTC 13129 / Biotype gravis) protein is Large ribosomal subunit protein uL1.